The primary structure comprises 440 residues: Trigger factor (440 aa).

One can recognise a PPIase FKBP-type domain in the interval 163–248 (GDTVVIDFKG…VHEVKTKELP (86 aa)).

This sequence belongs to the FKBP-type PPIase family. Tig subfamily.

It localises to the cytoplasm. The enzyme catalyses [protein]-peptidylproline (omega=180) = [protein]-peptidylproline (omega=0). Functionally, involved in protein export. Acts as a chaperone by maintaining the newly synthesized protein in an open conformation. Functions as a peptidyl-prolyl cis-trans isomerase. In Lactiplantibacillus plantarum (strain ATCC BAA-793 / NCIMB 8826 / WCFS1) (Lactobacillus plantarum), this protein is Trigger factor.